Consider the following 102-residue polypeptide: Monothiol glutaredoxin-S7 (102 aa).

In terms of domain architecture, Glutaredoxin spans 1-101 (MEKLQKMTSE…PMLKRVGALW (101 aa)). Cys-21 serves as a coordination point for [2Fe-2S] cluster. Positions 99 to 102 (ALWL) match the Responsive for interaction with TGA factors motif.

This sequence belongs to the glutaredoxin family. CC-type subfamily.

It localises to the cytoplasm. The protein resides in the nucleus. Its function is as follows. May only reduce GSH-thiol disulfides, but not protein disulfides. This Arabidopsis thaliana (Mouse-ear cress) protein is Monothiol glutaredoxin-S7 (GRXS7).